Here is a 356-residue protein sequence, read N- to C-terminus: Fructose-1,6-bisphosphatase class 1 (356 aa).

Mg(2+) is bound by residues E91, D113, L115, and D116. Residues 116-119 (DGSS) and N208 each bind substrate. Position 280 (E280) interacts with Mg(2+).

Belongs to the FBPase class 1 family. In terms of assembly, homotetramer. Mg(2+) is required as a cofactor.

It localises to the cytoplasm. The enzyme catalyses beta-D-fructose 1,6-bisphosphate + H2O = beta-D-fructose 6-phosphate + phosphate. Its pathway is carbohydrate biosynthesis; gluconeogenesis. The sequence is that of Fructose-1,6-bisphosphatase class 1 from Methylacidiphilum infernorum (isolate V4) (Methylokorus infernorum (strain V4)).